The sequence spans 193 residues: Protein GrpE (193 aa).

Residues 1–40 form a disordered region; that stretch reads MTEENRPQPDQPELTVTSESSVQETGENKARTPEQEGEAM. Residues 14-25 are compositionally biased toward polar residues; sequence LTVTSESSVQET.

Belongs to the GrpE family. As to quaternary structure, homodimer.

It is found in the cytoplasm. Functionally, participates actively in the response to hyperosmotic and heat shock by preventing the aggregation of stress-denatured proteins, in association with DnaK and GrpE. It is the nucleotide exchange factor for DnaK and may function as a thermosensor. Unfolded proteins bind initially to DnaJ; upon interaction with the DnaJ-bound protein, DnaK hydrolyzes its bound ATP, resulting in the formation of a stable complex. GrpE releases ADP from DnaK; ATP binding to DnaK triggers the release of the substrate protein, thus completing the reaction cycle. Several rounds of ATP-dependent interactions between DnaJ, DnaK and GrpE are required for fully efficient folding. In Nitrosospira multiformis (strain ATCC 25196 / NCIMB 11849 / C 71), this protein is Protein GrpE.